The chain runs to 243 residues: MLPFWIALQFLGSLPIRLPGMPSPEELGRSLLFYPLVGAVFGTLLLGFNTLLSGAPLMLHAALVLTAWVLLSGGLHLDGLADSADAWLGGFGDRERTLKIMKDPRSGPIAVVTLVLVLLLKFAAILALIESHASVWLLLAPVIGRAAMLGLFLGTPYVRSGGLGQALADHLPRGPGRKVLLATAIACVLLAGWSGVAVLLVCAVCFFWLRQLMMRRLGGCTGDTAGALLELLELAVLLTLALL.

5 helical membrane passes run 31-51, 55-75, 109-129, 133-153, and 188-208; these read LLFY…FNTL, APLM…SGGL, IAVV…LALI, ASVW…GLFL, and VLLA…CFFW.

The protein belongs to the CobS family. It depends on Mg(2+) as a cofactor.

The protein resides in the cell inner membrane. It carries out the reaction alpha-ribazole + adenosylcob(III)inamide-GDP = adenosylcob(III)alamin + GMP + H(+). The enzyme catalyses alpha-ribazole 5'-phosphate + adenosylcob(III)inamide-GDP = adenosylcob(III)alamin 5'-phosphate + GMP + H(+). It participates in cofactor biosynthesis; adenosylcobalamin biosynthesis; adenosylcobalamin from cob(II)yrinate a,c-diamide: step 7/7. In terms of biological role, joins adenosylcobinamide-GDP and alpha-ribazole to generate adenosylcobalamin (Ado-cobalamin). Also synthesizes adenosylcobalamin 5'-phosphate from adenosylcobinamide-GDP and alpha-ribazole 5'-phosphate. This is Adenosylcobinamide-GDP ribazoletransferase from Pseudomonas syringae pv. syringae (strain B728a).